The primary structure comprises 230 residues: Oxaloacetate tautomerase FAHD1, mitochondrial (230 aa).

The N-terminal 26 residues, 1–26, are a transit peptide targeting the mitochondrion; the sequence is MAAAAAAAAQRLLAASTKIIGVGRNY. Mg(2+) contacts are provided by glutamate 73, glutamate 75, and aspartate 104.

It belongs to the FAH family. The cofactor is Mg(2+). Requires Mn(2+) as cofactor.

It localises to the mitochondrion. The enzyme catalyses oxaloacetate = enol-oxaloacetate. Its function is as follows. Tautomerase that converts enol-oxaloacetate, a strong inhibitor of succinate dehydrogenase, to the physiological keto form of oxaloacetate. In Oryza sativa subsp. japonica (Rice), this protein is Oxaloacetate tautomerase FAHD1, mitochondrial.